Consider the following 632-residue polypeptide: Bifunctional protein GlmU (632 aa).

The interval 1 to 229 (MAERELSVAI…PQEIVGVNDR (229 aa)) is pyrophosphorylase. Residues 11-14 (LAAG), Lys25, Gln76, and 81-82 (GT) contribute to the UDP-N-acetyl-alpha-D-glucosamine site. Position 106 (Asp106) interacts with Mg(2+). Gly143, Glu158, Asn173, and Asn227 together coordinate UDP-N-acetyl-alpha-D-glucosamine. Asn227 is a binding site for Mg(2+). The tract at residues 230–250 (RQLAQAYQILQDRLKEAWMEA) is linker. Positions 251–632 (GVTFVDPDSS…ADNSRPKSLQ (382 aa)) are N-acetyltransferase. UDP-N-acetyl-alpha-D-glucosamine contacts are provided by Arg332 and Lys350. Residue His362 is the Proton acceptor of the active site. Residues Tyr365 and Asn376 each contribute to the UDP-N-acetyl-alpha-D-glucosamine site. Acetyl-CoA-binding positions include Ala379, 385 to 386 (NY), Ala422, and Arg441. The segment at 600–632 (VAGDPCWPSPPPQPQQNQQTKPEADNSRPKSLQ) is disordered. The span at 621 to 632 (PEADNSRPKSLQ) shows a compositional bias: basic and acidic residues.

This sequence in the N-terminal section; belongs to the N-acetylglucosamine-1-phosphate uridyltransferase family. In the C-terminal section; belongs to the transferase hexapeptide repeat family. As to quaternary structure, homotrimer. Mg(2+) is required as a cofactor.

The protein resides in the cytoplasm. The catalysed reaction is alpha-D-glucosamine 1-phosphate + acetyl-CoA = N-acetyl-alpha-D-glucosamine 1-phosphate + CoA + H(+). It carries out the reaction N-acetyl-alpha-D-glucosamine 1-phosphate + UTP + H(+) = UDP-N-acetyl-alpha-D-glucosamine + diphosphate. The protein operates within nucleotide-sugar biosynthesis; UDP-N-acetyl-alpha-D-glucosamine biosynthesis; N-acetyl-alpha-D-glucosamine 1-phosphate from alpha-D-glucosamine 6-phosphate (route II): step 2/2. Its pathway is nucleotide-sugar biosynthesis; UDP-N-acetyl-alpha-D-glucosamine biosynthesis; UDP-N-acetyl-alpha-D-glucosamine from N-acetyl-alpha-D-glucosamine 1-phosphate: step 1/1. It participates in bacterial outer membrane biogenesis; LPS lipid A biosynthesis. Functionally, catalyzes the last two sequential reactions in the de novo biosynthetic pathway for UDP-N-acetylglucosamine (UDP-GlcNAc). The C-terminal domain catalyzes the transfer of acetyl group from acetyl coenzyme A to glucosamine-1-phosphate (GlcN-1-P) to produce N-acetylglucosamine-1-phosphate (GlcNAc-1-P), which is converted into UDP-GlcNAc by the transfer of uridine 5-monophosphate (from uridine 5-triphosphate), a reaction catalyzed by the N-terminal domain. In Synechococcus sp. (strain JA-2-3B'a(2-13)) (Cyanobacteria bacterium Yellowstone B-Prime), this protein is Bifunctional protein GlmU.